Here is a 395-residue protein sequence, read N- to C-terminus: Cytochrome b561 and DOMON domain-containing protein At5g47530 (395 aa).

Residues 1–24 (MAISSNLLLCLSLFIFIITKSALA) form the signal peptide. The 116-residue stretch at 47-162 (LDSFLHYTYD…GIINTVWQDG (116 aa)) folds into the DOMON domain. Positions 176–371 (GNNVRSVSTL…LEGFTWYVVI (196 aa)) constitute a Cytochrome b561 domain. 2 helical membrane passes run 210 to 230 (IHGI…AIIA) and 242 to 262 (AWFY…VAGW). Residues histidine 211, histidine 247, and histidine 280 each coordinate heme b. Residues 282–302 (AVGIALFCLATIQVFAMFLRP) traverse the membrane as a helical segment. Histidine 316 is a binding site for heme b. Helical transmembrane passes span 318–338 (TVGY…LDIL) and 351–371 (IIVV…YVVI).

It depends on heme b as a cofactor.

It is found in the membrane. Its function is as follows. May act as a catecholamine-responsive trans-membrane electron transporter. In Arabidopsis thaliana (Mouse-ear cress), this protein is Cytochrome b561 and DOMON domain-containing protein At5g47530.